Consider the following 202-residue polypeptide: MQIPTLIDSMANKLHKKPPPLLKLTVIASDAEFHPPPLLGISYEELGSKLVNFATTRNVAMEFRIISSSYSDGLSSLIEQLRIDPFVFNEALVVNCHMMLHYIPDEILTSNLRSVFLKELRDLNPTIVTLIDEDSDFTSTNFISRLRSLYNYMWIPYDTAEMFLTRGSEQRQWYEADISWKIDNVVAKEGAERVERLEPKSR.

The VHIID stretch occupies residues 1–26 (MQIPTLIDSMANKLHKKPPPLLKLTV). In terms of domain architecture, GRAS spans 1-202 (MQIPTLIDSM…RVERLEPKSR (202 aa)). Residues 45–82 (ELGSKLVNFATTRNVAMEFRIISSSYSDGLSSLIEQLR) are leucine repeat II (LRII). Residues 92 to 184 (LVVNCHMMLH…EADISWKIDN (93 aa)) are PFYRE. Residues 187–202 (AKEGAERVERLEPKSR) are SAW.

This sequence belongs to the GRAS family. As to expression, expressed in seedlings, leaves and flowers.

The protein localises to the nucleus. In terms of biological role, probable transcription factor involved in plant development. In Arabidopsis thaliana (Mouse-ear cress), this protein is Putative scarecrow-like protein 16 (SCL16).